The primary structure comprises 310 residues: HPr kinase/phosphorylase (310 aa).

Active-site residues include H136 and K157. Residue 151–158 (GDSGIGKS) coordinates ATP. Position 158 (S158) interacts with Mg(2+). The active-site Proton acceptor; for phosphorylation activity. Proton donor; for dephosphorylation activity is D175. The tract at residues 199 to 208 (LEIRGLGIIN) is important for the catalytic mechanism of both phosphorylation and dephosphorylation. E200 provides a ligand contact to Mg(2+). R241 is a catalytic residue. An important for the catalytic mechanism of dephosphorylation region spans residues 262 to 267 (PVRPGR).

It belongs to the HPrK/P family. In terms of assembly, homohexamer. Mg(2+) is required as a cofactor.

The enzyme catalyses [HPr protein]-L-serine + ATP = [HPr protein]-O-phospho-L-serine + ADP + H(+). It carries out the reaction [HPr protein]-O-phospho-L-serine + phosphate + H(+) = [HPr protein]-L-serine + diphosphate. Its function is as follows. Catalyzes the ATP- as well as the pyrophosphate-dependent phosphorylation of a specific serine residue in HPr, a phosphocarrier protein of the phosphoenolpyruvate-dependent sugar phosphotransferase system (PTS). HprK/P also catalyzes the pyrophosphate-producing, inorganic phosphate-dependent dephosphorylation (phosphorolysis) of seryl-phosphorylated HPr (P-Ser-HPr). The two antagonistic activities of HprK/P are regulated by several intracellular metabolites, which change their concentration in response to the absence or presence of rapidly metabolisable carbon sources (glucose, fructose, etc.) in the growth medium. Therefore, by controlling the phosphorylation state of HPr, HPrK/P is a sensor enzyme that plays a major role in the regulation of carbon metabolism and sugar transport: it mediates carbon catabolite repression (CCR), and regulates PTS-catalyzed carbohydrate uptake and inducer exclusion. This chain is HPr kinase/phosphorylase, found in Staphylococcus aureus (strain Mu3 / ATCC 700698).